The primary structure comprises 170 residues: Photosystem I assembly protein Ycf3 (170 aa).

TPR repeat units lie at residues 35-68 (AFTY…EIDP), 72-105 (SYIL…NPFL), and 120-153 (GEQA…TPGN).

The protein belongs to the Ycf3 family.

Its subcellular location is the plastid. The protein localises to the chloroplast thylakoid membrane. In terms of biological role, essential for the assembly of the photosystem I (PSI) complex. May act as a chaperone-like factor to guide the assembly of the PSI subunits. This is Photosystem I assembly protein Ycf3 from Zea mays (Maize).